Here is a 513-residue protein sequence, read N- to C-terminus: Calcium-dependent protein kinase 2 (513 aa).

A lipid anchor (N-myristoyl glycine) is attached at G2. A Protein kinase domain is found at 72–326 (YIIDEKLGQG…IEEALNHPWI (255 aa)). Residues 78 to 86 (LGQGTYGCV) and K101 each bind ATP. The active-site Proton acceptor is D192. The J domain autoinhibitory motif signature appears at 345-353 (NLKNFKKEN). The segment at 345–380 (NLKNFKKENELKKIALTIIAKHLCDVEINNLRNIFI) is j domain. Residues 354 to 363 (ELKKIALTII) carry the J domain EF-hand interaction motif motif. 4 EF-hand domains span residues 370–405 (VEIN…IGYQ), 406–441 (KIPP…KQTY), 442–477 (LKKE…DDIE), and 480–513 (LIDK…SKKK). 5 residues coordinate Ca(2+): D383, D385, S387, T389, and E394. 10 residues coordinate Ca(2+): D455, D457, N459, K461, E466, D493, N495, D497, E499, and E504.

This sequence belongs to the protein kinase superfamily. Ser/Thr protein kinase family. CDPK subfamily. As to quaternary structure, monomer. Mg(2+) serves as cofactor. Post-translationally, myristoylated; myristoylation may target it to different subcellular compartments. Autophosphorylated in vitro.

The enzyme catalyses L-seryl-[protein] + ATP = O-phospho-L-seryl-[protein] + ADP + H(+). The catalysed reaction is L-threonyl-[protein] + ATP = O-phospho-L-threonyl-[protein] + ADP + H(+). Activated by calcium. Upon calcium binding to the EF-hand domains, the C-terminus of the junction domain (J domain) undergoes a conformational change which results in the dissociation of the pseudo-substrate inhibitory motif from the catalytic domain. This, in turn, may facilitate the autophosphorylation of the activation loop at Thr-232, which leads to the kinase activation. In terms of biological role, calcium-dependent protein kinase which acts as a sensor and effector of intracellular Ca(2+) levels probably in part downstream of cGMP-activated PKG kinase. During male gametogenesis in the mosquito gut, required for male exflagellation, possibly by regulating male gamete exit from the host erythrocytes. Not required for asexual blood stage proliferation. This chain is Calcium-dependent protein kinase 2, found in Plasmodium falciparum (isolate K1 / Thailand).